Here is a 133-residue protein sequence, read N- to C-terminus: ATP synthase epsilon chain, chloroplastic (133 aa).

It belongs to the ATPase epsilon chain family. As to quaternary structure, F-type ATPases have 2 components, CF(1) - the catalytic core - and CF(0) - the membrane proton channel. CF(1) has five subunits: alpha(3), beta(3), gamma(1), delta(1), epsilon(1). CF(0) has three main subunits: a, b and c.

Its subcellular location is the plastid. The protein localises to the chloroplast thylakoid membrane. Its function is as follows. Produces ATP from ADP in the presence of a proton gradient across the membrane. This is ATP synthase epsilon chain, chloroplastic from Jasminum nudiflorum (Winter jasmine).